The chain runs to 169 residues: MANEKNQQTLGSLKDSLQGIETFYVVDYQGLTAGQLTQLRKDIREKGGQLIVAKNTLLNLALQEGGRDFDDALKGPSALVLAQEDPAGVAKALSDAAGRNDRGIPTVKGGFVEGSKVDVAVVQRLASLGSKTTLQAELVGVLSAHLSNFVGILEAYREKLEGEGGSESA.

Belongs to the universal ribosomal protein uL10 family. In terms of assembly, part of the 50S ribosomal subunit.

The polypeptide is Large ribosomal subunit protein uL10 (rplJ) (Deinococcus radiodurans (strain ATCC 13939 / DSM 20539 / JCM 16871 / CCUG 27074 / LMG 4051 / NBRC 15346 / NCIMB 9279 / VKM B-1422 / R1)).